Here is a 151-residue protein sequence, read N- to C-terminus: Deoxyuridine 5'-triphosphate nucleotidohydrolase (151 aa).

Residues 69-71, N82, 86-88, and M96 each bind substrate; these read RSG and LID.

This sequence belongs to the dUTPase family. Mg(2+) serves as cofactor.

The enzyme catalyses dUTP + H2O = dUMP + diphosphate + H(+). Its pathway is pyrimidine metabolism; dUMP biosynthesis; dUMP from dCTP (dUTP route): step 2/2. This enzyme is involved in nucleotide metabolism: it produces dUMP, the immediate precursor of thymidine nucleotides and it decreases the intracellular concentration of dUTP so that uracil cannot be incorporated into DNA. In Blochmanniella floridana, this protein is Deoxyuridine 5'-triphosphate nucleotidohydrolase.